Reading from the N-terminus, the 478-residue chain is Probable cytosolic Fe-S cluster assembly factor AGAP009023 (478 aa).

Residues cysteine 23, cysteine 69, cysteine 72, cysteine 75, cysteine 189, cysteine 245, cysteine 396, and cysteine 400 each contribute to the [4Fe-4S] cluster site.

It belongs to the NARF family.

Its function is as follows. Component of the cytosolic iron-sulfur (Fe/S) protein assembly machinery. Required for maturation of extramitochondrial Fe/S proteins. In Anopheles gambiae (African malaria mosquito), this protein is Probable cytosolic Fe-S cluster assembly factor AGAP009023.